Reading from the N-terminus, the 36-residue chain is MSDINATRLPIWGIGCDPCIGDDVTALLTRGEASLC.

Residues 1–10 (MSDINATRLP) constitute a propeptide that is removed on maturation. The cyclopeptide (Ile-Pro) cross-link spans 11 to 18 (IWGIGCDP). The 2'-cysteinyl-6'-hydroxytryptophan sulfoxide (Trp-Cys) cross-link spans 12 to 16 (WGIGC). Residues 19 to 36 (CIGDDVTALLTRGEASLC) constitute a propeptide that is removed on maturation.

This sequence belongs to the MSDIN fungal toxin family. Processed by the macrocyclase-peptidase enzyme POPB to yield a toxic cyclic decapeptide. POPB first removes 10 residues from the N-terminus. Conformational trapping of the remaining peptide forces the enzyme to release this intermediate rather than proceed to macrocyclization. The enzyme rebinds the remaining peptide in a different conformation and catalyzes macrocyclization of the N-terminal 8 residues.

Toxin belonging to the bicyclic octapeptides amatoxins that acts by binding non-competitively to RNA polymerase II and greatly slowing the elongation of transcripts from target promoters. The chain is Beta-amanitin proprotein from Amanita phalloides (Death cap).